Reading from the N-terminus, the 423-residue chain is Serine--tRNA ligase (423 aa).

L-serine is bound at residue 231-233 (TGE). 262 to 264 (RSE) is a binding site for ATP. Glutamate 285 provides a ligand contact to L-serine. An ATP-binding site is contributed by 349 to 352 (EISS). Serine 385 is a binding site for L-serine.

Belongs to the class-II aminoacyl-tRNA synthetase family. Type-1 seryl-tRNA synthetase subfamily. Homodimer. The tRNA molecule binds across the dimer.

It is found in the cytoplasm. The catalysed reaction is tRNA(Ser) + L-serine + ATP = L-seryl-tRNA(Ser) + AMP + diphosphate + H(+). It carries out the reaction tRNA(Sec) + L-serine + ATP = L-seryl-tRNA(Sec) + AMP + diphosphate + H(+). It participates in aminoacyl-tRNA biosynthesis; selenocysteinyl-tRNA(Sec) biosynthesis; L-seryl-tRNA(Sec) from L-serine and tRNA(Sec): step 1/1. Its function is as follows. Catalyzes the attachment of serine to tRNA(Ser). Is also able to aminoacylate tRNA(Sec) with serine, to form the misacylated tRNA L-seryl-tRNA(Sec), which will be further converted into selenocysteinyl-tRNA(Sec). This chain is Serine--tRNA ligase, found in Coxiella burnetii (strain RSA 331 / Henzerling II).